A 282-amino-acid chain; its full sequence is Probable endonuclease 4 (282 aa).

Residues histidine 67, histidine 107, glutamate 144, aspartate 178, histidine 181, histidine 215, aspartate 228, histidine 230, and glutamate 260 each coordinate Zn(2+).

It belongs to the AP endonuclease 2 family. It depends on Zn(2+) as a cofactor.

It carries out the reaction Endonucleolytic cleavage to 5'-phosphooligonucleotide end-products.. Its function is as follows. Endonuclease IV plays a role in DNA repair. It cleaves phosphodiester bonds at apurinic or apyrimidinic (AP) sites, generating a 3'-hydroxyl group and a 5'-terminal sugar phosphate. This chain is Probable endonuclease 4, found in Methanoculleus marisnigri (strain ATCC 35101 / DSM 1498 / JR1).